The following is a 390-amino-acid chain: Serpin B4 (390 aa).

Position 1 is an N-acetylmethionine (M1).

The protein belongs to the serpin family. Ov-serpin subfamily. Squamous cells.

It localises to the cytoplasm. May act as a protease inhibitor to modulate the host immune response against tumor cells. This Homo sapiens (Human) protein is Serpin B4 (SERPINB4).